We begin with the raw amino-acid sequence, 413 residues long: Gamma-DL-glutamyl hydrolase (413 aa).

Positions 1–32 are cleaved as a signal peptide; that stretch reads MNTLANWKKFLLVAVIICFLVPIMTKAEIAEA. 3 NlpC/P60 domains span residues 33–159, 163–287, and 291–413; these read DTSS…RRIA, ATAD…RRFD, and IPKE…IRVQ. The active-site Nucleophile is the cysteine 194. Residue histidine 247 is the Proton acceptor of the active site. Glutamine 259 is an active-site residue.

It belongs to the peptidase C40 family.

Its subcellular location is the secreted. The protein localises to the cell wall. Inhibited by pretreatment with 1 mM 4-(hydroxymercuri)benzoate, a sulfhydryl inhibitor. Its function is as follows. Cleaves, in an endo-type manner, the gamma-glutamyl bond between D-glutamate and L-glutamate of poly-gamma-glutamate (PGA). In Bacillus subtilis (strain 168), this protein is Gamma-DL-glutamyl hydrolase (pgdS).